Here is a 504-residue protein sequence, read N- to C-terminus: Chorion-specific transcription factor GCMb (504 aa).

Residues 19-174 (LTWDINDPQM…KSETEGRRSA (156 aa)) constitute a DNA-binding region (GCM). Residues cysteine 81, cysteine 87, cysteine 91, cysteine 118, cysteine 121, cysteine 130, histidine 157, and histidine 159 each contribute to the Zn(2+) site. Composition is skewed to basic and acidic residues over residues 155–172 (GVHD…EGRR) and 188–203 (RRSE…DIRG). Positions 155-203 (GVHDHPRPESKSETEGRRSALKRQMASFYQPQKRRSEEPEARSTQDIRG) are disordered. Positions 379–393 (LQTVITTTVAYQAYQ) are C-terminal conserved inhibitory domain (CCID). The segment at 438–472 (ASPSGRAPLKVPGDCQAPRPTLDFPQEADPSGTDG) is disordered.

Its subcellular location is the nucleus. In terms of biological role, transcription factor that binds specific sequences on gene promoters and activate their transcription. Through the regulation of gene transcription, may play a role in parathyroid gland development. The sequence is that of Chorion-specific transcription factor GCMb from Mus musculus (Mouse).